A 448-amino-acid polypeptide reads, in one-letter code: Probable alpha-galactosidase B (448 aa).

The first 23 residues, 1 to 23 (MSRFHLPLAAAVVLVSCLWSANA), serve as a signal peptide directing secretion. Disulfide bonds link Cys-46–Cys-78 and Cys-128–Cys-158. Asp-156 serves as the catalytic Nucleophile. N-linked (GlcNAc...) asparagine glycans are attached at residues Asn-163 and Asn-181. Position 226 to 230 (226 to 230 (EWGQA)) interacts with substrate. A glycan (N-linked (GlcNAc...) asparagine) is linked at Asn-237. Asp-248 (proton donor) is an active-site residue.

It belongs to the glycosyl hydrolase 27 family.

The protein resides in the secreted. It carries out the reaction Hydrolysis of terminal, non-reducing alpha-D-galactose residues in alpha-D-galactosides, including galactose oligosaccharides, galactomannans and galactolipids.. Its function is as follows. Hydrolyzes a variety of simple alpha-D-galactoside as well as more complex molecules such as oligosaccharides and polysaccharides. The chain is Probable alpha-galactosidase B (aglB) from Aspergillus clavatus (strain ATCC 1007 / CBS 513.65 / DSM 816 / NCTC 3887 / NRRL 1 / QM 1276 / 107).